A 374-amino-acid chain; its full sequence is Glutamine synthetase (374 aa).

The required for glutamine-induced ubiquitination by CRL4(CRBN) and proteasomal degradation stretch occupies residues 2–25 (TTSASSHLNKGIKQVYMSLPQGEK). An N6-acetyllysine mark is found at lysine 11 and lysine 14. A GS beta-grasp domain is found at 24 to 106 (EKVQAMYIWI…VLCESFQVQF (83 aa)). Residues 114 to 374 (LRHTCKRIMD…TGDEPFQYKN (261 aa)) enclose the GS catalytic domain. Glutamate 135 lines the ATP pocket. Glutamate 135, glutamate 137, glutamate 197, and glutamate 204 together coordinate Mn(2+). 204–209 (EFQIGP) contacts ATP. 247 to 248 (NW) serves as a coordination point for L-glutamate. Histidine 254 is a Mn(2+) binding site. Residues 256 to 258 (NFS), arginine 320, and arginine 325 contribute to the ATP site. Arginine 320 is a binding site for L-glutamate. 337–339 (YFE) contributes to the ADP binding site. Residue glutamate 339 participates in Mn(2+) binding. Residue arginine 341 participates in L-glutamate binding. Position 344 is a phosphoserine (serine 344).

It belongs to the glutamine synthetase family. As to quaternary structure, decamer; composed of two pentamers. Interacts with PALMD. Interacts with RHOJ. Interacts with BEST2; this interaction tethers a fraction of GLUL to the membrane, causing a decrease of cytosolic glutamine synthase (GS) activity and inhibits the chloride channel activity of BEST2 by affecting the gating at the aperture in the absence of intracellular glutamate. Mg(2+) serves as cofactor. Requires Mn(2+) as cofactor. Palmitoylated; undergoes autopalmitoylation. Post-translationally, acetylated by EP300/p300; acetylation is stimulated by increased glutamine levels and promotes ubiquitin-mediated proteasomal degradation. In terms of processing, ubiquitinated by ZNRF1. Ubiquitinated by the DCX (DDB1-CUL4-X-box) E3 ubiquitin-protein ligase complex called CRL4(CRBN), leading to proteasomal degradation.

The protein localises to the cytoplasm. The protein resides in the cytosol. It is found in the microsome. It localises to the mitochondrion. Its subcellular location is the cell membrane. The catalysed reaction is L-glutamate + NH4(+) + ATP = L-glutamine + ADP + phosphate + H(+). The enzyme catalyses L-cysteinyl-[protein] + hexadecanoyl-CoA = S-hexadecanoyl-L-cysteinyl-[protein] + CoA. With respect to regulation, glutamine synthetase activity is inhibited by methionine sulfoximine (MSO). Functionally, glutamine synthetase that catalyzes the ATP-dependent conversion of glutamate and ammonia to glutamine. Its role depends on tissue localization: in the brain, it regulates the levels of toxic ammonia and converts neurotoxic glutamate to harmless glutamine, whereas in the liver, it is one of the enzymes responsible for the removal of ammonia. Plays a key role in ammonium detoxification during erythropoiesis: the glutamine synthetase activity is required to remove ammonium generated by porphobilinogen deaminase (HMBS) during heme biosynthesis to prevent ammonium accumulation and oxidative stress. Essential for proliferation of fetal skin fibroblasts. Independently of its glutamine synthetase activity, required for endothelial cell migration during vascular development. Involved in angiogenesis by regulating membrane localization and activation of the GTPase RHOJ, possibly by promoting RHOJ palmitoylation. May act as a palmitoyltransferase for RHOJ: able to autopalmitoylate and then transfer the palmitoyl group to RHOJ. Plays a role in ribosomal 40S subunit biogenesis. Through the interaction with BEST2, inhibits BEST2 channel activity by affecting the gating at the aperture in the absence of intracellular L-glutamate, but sensitizes BEST2 to intracellular L-glutamate, which promotes the opening of BEST2 and thus relieves its inhibitory effect on BEST2. This Macaca fascicularis (Crab-eating macaque) protein is Glutamine synthetase.